The chain runs to 163 residues: Cyclic pyranopterin monophosphate synthase (163 aa).

Substrate is bound by residues 78-80 (LCH) and 116-117 (ME). Asp131 is a catalytic residue.

Belongs to the MoaC family. In terms of assembly, homohexamer; trimer of dimers.

It carries out the reaction (8S)-3',8-cyclo-7,8-dihydroguanosine 5'-triphosphate = cyclic pyranopterin phosphate + diphosphate. It functions in the pathway cofactor biosynthesis; molybdopterin biosynthesis. Functionally, catalyzes the conversion of (8S)-3',8-cyclo-7,8-dihydroguanosine 5'-triphosphate to cyclic pyranopterin monophosphate (cPMP). In Agrobacterium fabrum (strain C58 / ATCC 33970) (Agrobacterium tumefaciens (strain C58)), this protein is Cyclic pyranopterin monophosphate synthase.